We begin with the raw amino-acid sequence, 323 residues long: Arginase (323 aa).

Residues His119, Asp142, His144, and Asp146 each coordinate Mn(2+). Substrate contacts are provided by residues 144 to 148 (HADIN), 155 to 157 (SKN), and Asp198. Residues Asp247 and Asp249 each contribute to the Mn(2+) site. Substrate contacts are provided by Thr261 and Glu292.

This sequence belongs to the arginase family. As to quaternary structure, homotrimer. Mn(2+) serves as cofactor.

The enzyme catalyses L-arginine + H2O = urea + L-ornithine. The protein operates within nitrogen metabolism; urea cycle; L-ornithine and urea from L-arginine: step 1/1. In Schizosaccharomyces pombe (strain 972 / ATCC 24843) (Fission yeast), this protein is Arginase (car1).